A 431-amino-acid chain; its full sequence is Glutamate-1-semialdehyde 2,1-aminomutase (431 aa).

Lys269 is subject to N6-(pyridoxal phosphate)lysine.

Belongs to the class-III pyridoxal-phosphate-dependent aminotransferase family. HemL subfamily. In terms of assembly, homodimer. Requires pyridoxal 5'-phosphate as cofactor.

It is found in the cytoplasm. The enzyme catalyses (S)-4-amino-5-oxopentanoate = 5-aminolevulinate. It participates in porphyrin-containing compound metabolism; protoporphyrin-IX biosynthesis; 5-aminolevulinate from L-glutamyl-tRNA(Glu): step 2/2. This is Glutamate-1-semialdehyde 2,1-aminomutase from Francisella tularensis subsp. tularensis (strain WY96-3418).